A 183-amino-acid polypeptide reads, in one-letter code: Ribulose bisphosphate carboxylase small subunit, chloroplastic (183 aa).

Residues 1 to 59 (MASSMISSGTVATVSADRPAPAQARMVAPFTGLKSSSASPVTRKSNDITSIASNGGRVQ) constitute a chloroplast transit peptide.

It belongs to the RuBisCO small chain family. Heterohexadecamer of 8 large and 8 small subunits.

The protein localises to the plastid. It is found in the chloroplast. RuBisCO catalyzes two reactions: the carboxylation of D-ribulose 1,5-bisphosphate, the primary event in carbon dioxide fixation, as well as the oxidative fragmentation of the pentose substrate. Both reactions occur simultaneously and in competition at the same active site. Although the small subunit is not catalytic it is essential for maximal activity. This is Ribulose bisphosphate carboxylase small subunit, chloroplastic from Malus sp. (Crab apple).